An 808-amino-acid polypeptide reads, in one-letter code: Potassium transporter 5 (808 aa).

Residues 1 to 65 (MAEEVGETRG…NQVNWKKTLS (65 aa)) are Cytoplasmic-facing. A helical membrane pass occupies residues 66 to 86 (LTFQSIGVVYGDIGTSPLYVY). The Extracellular segment spans residues 87–102 (ESTFPDKIGSKEDILG). The helical transmembrane segment at 103-123 (VLSLIIYTLVLLPMLKYVFIV) threads the bilayer. The Cytoplasmic portion of the chain corresponds to 124–189 (LRANDNGDGG…EKMENSKNIK (66 aa)). The chain crosses the membrane as a helical span at residues 190–210 (ILLFLVTILGTSMVIGDGVLT). The Extracellular portion of the chain corresponds to 211-221 (PCISVLSAVSG). The chain crosses the membrane as a helical span at residues 222-242 (IGSLGQDAVVGISIAILIVLF). Over 243–251 (CAQRLGTDK) the chain is Cytoplasmic. The helical transmembrane segment at 252-272 (VGFSFAPIILLWFSFIGGIGL) threads the bilayer. Residues 273–302 (YNLFKYDVSVLRAFNPKYMFDYFKRNGKQG) lie on the Extracellular side of the membrane. A helical transmembrane segment spans residues 303–323 (WISLGGVVLAVTGTEAMFADL). The Cytoplasmic segment spans residues 324 to 327 (GHFN). The chain crosses the membrane as a helical span at residues 328–348 (VQAIQISFSGIVFPALLCAYA). The Extracellular segment spans residues 349–379 (GQAAYLTKFPDDVSKTFYKSIPDPLYWPTFV). Residues 380 to 400 (VAVAAAIIASQAMISGAFAII) traverse the membrane as a helical segment. The Cytoplasmic segment spans residues 401-424 (SQSLSLGCFPRVKVIHTSAKYEGQ). A helical membrane pass occupies residues 425-445 (VYIPEVNYILMIACIMVCLGF). The Extracellular segment spans residues 446 to 456 (KTTEKIGNAYG). The helical transmembrane segment at 457 to 477 (IAVVAVMVITTCMVTIIMLVV) threads the bilayer. The Cytoplasmic segment spans residues 478–482 (WRTKM). A helical transmembrane segment spans residues 483–503 (IWIAFFFFGFICIEAVYLSSV). At 504 to 510 (LYKFKDG) the chain is on the extracellular side. A helical membrane pass occupies residues 511–531 (GFLPLAFSFFLMIIMGIWHYI). Residues 532–808 (HKERYMYELK…LLRVGMTYEI (277 aa)) lie on the Cytoplasmic side of the membrane. The segment at 699 to 722 (LQQPNPSRVSSGSIHSNSGIKSTK) is disordered.

This sequence belongs to the HAK/KUP transporter (TC 2.A.72.3) family. As to expression, expressed in the roots.

It is found in the cell membrane. It carries out the reaction K(+)(in) = K(+)(out). Its function is as follows. High-affinity potassium transporter that functions under low potassium conditions. Involved in the positive regulation of salt tolerance under salt stress. The sequence is that of Potassium transporter 5 from Manihot esculenta (Cassava).